Here is a 392-residue protein sequence, read N- to C-terminus: Antitrypsin (392 aa).

The first 16 residues, 1–16 (MKTIICLFTIAIAAMA), serve as a signal peptide directing secretion.

Belongs to the serpin family. Hemolymph.

Its subcellular location is the secreted. Functionally, may play a role in the prophenoloxidase activating system in the silkworm hemolymph. This is Antitrypsin from Bombyx mori (Silk moth).